The primary structure comprises 294 residues: Homeobox protein Nkx-2.5 (294 aa).

Disordered regions lie at residues 48 to 69 and 102 to 122; these read GSEP…PAAF and EQEK…RRKP. Residues 52 to 69 are compositionally biased toward pro residues; the sequence is PALPELPEPPPAKPPAAF. The span at 102–114 shows a compositional bias: basic and acidic residues; sequence EQEKRELEDPERP. The segment at residues 119–178 is a DNA-binding region (homeobox); it reads RRKPRVLFSQAQVYELERRFKQQKYLSAPERDHLANVLKLTSTQVKIWFQNRRYKCKRQR.

The protein belongs to the NK-2 homeobox family. Homodimer (via the homeobox); binds DNA as homodimer.

It is found in the nucleus. Transcription factor required for the development of the heart and the spleen. Implicated in commitment to and/or differentiation of the myocardial lineage. Binds to the core DNA motif of promoter. The chain is Homeobox protein Nkx-2.5 (NKX-2.5) from Gallus gallus (Chicken).